We begin with the raw amino-acid sequence, 234 residues long: Peptidase E (234 aa).

Residues Ser123, Asp138, and His160 each act as charge relay system in the active site.

The protein belongs to the peptidase S51 family.

The protein resides in the cytoplasm. The catalysed reaction is Dipeptidase E catalyzes the hydrolysis of dipeptides Asp-|-Xaa. It does not act on peptides with N-terminal Glu, Asn or Gln, nor does it cleave isoaspartyl peptides.. In terms of biological role, hydrolyzes dipeptides containing N-terminal aspartate residues. May play a role in allowing the cell to use peptide aspartate to spare carbon otherwise required for the synthesis of the aspartate family of amino acids. The chain is Peptidase E from Pasteurella multocida (strain Pm70).